Reading from the N-terminus, the 256-residue chain is Capsid protein (256 aa).

A Bipartite nuclear localization signal motif is present at residues 3–20; the sequence is KRPADIVISTPASKVRRK. The short motif at 40–54 is the Nuclear localization signal element; sequence RRRTWVNRPMYRKPM. A zinc finger lies at 68 to 85; it reads CEGPCKVQSYEQRHDVAH. The Nuclear export signal signature appears at 101 to 122; sequence ITHRTGKRFCIKSIYVLGKIWM. The Bipartite nuclear localization signal motif lies at 200–247; it reads NRFYKIYNHCTYNHQEAAKYENHTENALLLYMACTHASNPVYATLKIR.

The protein belongs to the geminiviridae capsid protein family. As to quaternary structure, homomultimer. Binds to single-stranded and double-stranded viral DNA. Interacts (via nuclear localization signals) with host importin alpha-1a.

Its subcellular location is the virion. It is found in the host nucleus. In terms of biological role, encapsidates the viral genome into characteristic twinned ('geminate') particles. Binds the genomic viral ssDNA and shuttles it into and out of the cell nucleus. Plays a role in protection of the genome from degradation, virus acquisition and transmission by insect vectors, infectivity, and systemic movement. The CP of monopartite geminiviruses is absolutely essential for virus movement. The chain is Capsid protein from Tomato leaf curl virus (strain Australia) (ToLCV).